A 292-amino-acid polypeptide reads, in one-letter code: Protoheme IX farnesyltransferase (292 aa).

Transmembrane regions (helical) follow at residues tyrosine 15–methionine 35, phenylalanine 49–isoleucine 69, valine 104–leucine 124, isoleucine 147–valine 167, alanine 171–leucine 191, threonine 218–valine 238, tyrosine 242–phenylalanine 262, and leucine 271–valine 291.

It belongs to the UbiA prenyltransferase family. Protoheme IX farnesyltransferase subfamily.

The protein resides in the cell inner membrane. The catalysed reaction is heme b + (2E,6E)-farnesyl diphosphate + H2O = Fe(II)-heme o + diphosphate. Its pathway is porphyrin-containing compound metabolism; heme O biosynthesis; heme O from protoheme: step 1/1. Functionally, converts heme B (protoheme IX) to heme O by substitution of the vinyl group on carbon 2 of heme B porphyrin ring with a hydroxyethyl farnesyl side group. In Aquifex aeolicus (strain VF5), this protein is Protoheme IX farnesyltransferase.